The primary structure comprises 185 residues: Ribosome-recycling factor (185 aa).

The protein belongs to the RRF family.

It localises to the cytoplasm. Responsible for the release of ribosomes from messenger RNA at the termination of protein biosynthesis. May increase the efficiency of translation by recycling ribosomes from one round of translation to another. This Nocardioides sp. (strain ATCC BAA-499 / JS614) protein is Ribosome-recycling factor.